The following is a 72-amino-acid chain: Translation initiation factor IF-1 (72 aa).

Positions 1-72 (MSKEEAIEVE…SRGRITYRAK (72 aa)) constitute an S1-like domain.

This sequence belongs to the IF-1 family. In terms of assembly, component of the 30S ribosomal translation pre-initiation complex which assembles on the 30S ribosome in the order IF-2 and IF-3, IF-1 and N-formylmethionyl-tRNA(fMet); mRNA recruitment can occur at any time during PIC assembly.

It is found in the cytoplasm. One of the essential components for the initiation of protein synthesis. Stabilizes the binding of IF-2 and IF-3 on the 30S subunit to which N-formylmethionyl-tRNA(fMet) subsequently binds. Helps modulate mRNA selection, yielding the 30S pre-initiation complex (PIC). Upon addition of the 50S ribosomal subunit IF-1, IF-2 and IF-3 are released leaving the mature 70S translation initiation complex. This chain is Translation initiation factor IF-1, found in Geobacter metallireducens (strain ATCC 53774 / DSM 7210 / GS-15).